We begin with the raw amino-acid sequence, 201 residues long: Peptidyl-tRNA hydrolase (201 aa).

Residue Y14 participates in tRNA binding. The active-site Proton acceptor is the H19. TRNA contacts are provided by Y64, N66, and N112.

The protein belongs to the PTH family. Monomer.

Its subcellular location is the cytoplasm. The catalysed reaction is an N-acyl-L-alpha-aminoacyl-tRNA + H2O = an N-acyl-L-amino acid + a tRNA + H(+). Hydrolyzes ribosome-free peptidyl-tRNAs (with 1 or more amino acids incorporated), which drop off the ribosome during protein synthesis, or as a result of ribosome stalling. Functionally, catalyzes the release of premature peptidyl moieties from peptidyl-tRNA molecules trapped in stalled 50S ribosomal subunits, and thus maintains levels of free tRNAs and 50S ribosomes. The chain is Peptidyl-tRNA hydrolase from Rhodopseudomonas palustris (strain BisB18).